The following is a 209-amino-acid chain: Small ribosomal subunit protein uS4 (209 aa).

In terms of domain architecture, S4 RNA-binding spans 98–161; it reads ARLDNVVYRM…RDLEVIKKAV (64 aa).

It belongs to the universal ribosomal protein uS4 family. Part of the 30S ribosomal subunit. Contacts protein S5. The interaction surface between S4 and S5 is involved in control of translational fidelity.

Its function is as follows. One of the primary rRNA binding proteins, it binds directly to 16S rRNA where it nucleates assembly of the body of the 30S subunit. Functionally, with S5 and S12 plays an important role in translational accuracy. This is Small ribosomal subunit protein uS4 from Thermotoga petrophila (strain ATCC BAA-488 / DSM 13995 / JCM 10881 / RKU-1).